Reading from the N-terminus, the 522-residue chain is Glucose-6-phosphate isomerase (522 aa).

Glu351 acts as the Proton donor in catalysis. Active-site residues include His382 and Lys491.

This sequence belongs to the GPI family.

The protein localises to the cytoplasm. It carries out the reaction alpha-D-glucose 6-phosphate = beta-D-fructose 6-phosphate. It functions in the pathway carbohydrate biosynthesis; gluconeogenesis. Its pathway is carbohydrate degradation; glycolysis; D-glyceraldehyde 3-phosphate and glycerone phosphate from D-glucose: step 2/4. Functionally, catalyzes the reversible isomerization of glucose-6-phosphate to fructose-6-phosphate. The polypeptide is Glucose-6-phosphate isomerase (Albidiferax ferrireducens (strain ATCC BAA-621 / DSM 15236 / T118) (Rhodoferax ferrireducens)).